The sequence spans 782 residues: uncharacterized protein (782 aa).

A DNA-binding region (zn(2)-C6 fungal-type) is located at residues 22-50; the sequence is CRECHRLKLKCDRVWPCENCKKRGIPNLC. Disordered stretches follow at residues 105 to 126 and 645 to 665; these read GEKPAEDTKDENRSQPIHDPDH and VPSSRPNSKSPDDSSMRAEKA. Basic and acidic residues predominate over residues 654-665; that stretch reads SPDDSSMRAEKA.

The protein resides in the nucleus. This is an uncharacterized protein from Schizosaccharomyces pombe (strain 972 / ATCC 24843) (Fission yeast).